Consider the following 286-residue polypeptide: MPELPEVEVVRRGLEDHMVGHTIVSATVLHPRAARNQLGGGPEIEANIAGLRVSAAKRRGKFLWLELIDAPSGETRPDLGLLVHLGMSGQMLIKEPDAPISPHLRAKIELDNGDEVWFVDQRTFGYWWLGDLVDGVPERVSHIATDVLDESADFSAIARNLKSRKSEIKRLLLNQEIVSGIGNIYADEMLWQAKIHPLQRADRLSLARLEELLQAGKDVMTKALAQGGTSFDALYVNVNGNSGYFSLSLNAYGQTGEPCGRCGTQIVRENFMNRGSHYCPNCQKRR.

Catalysis depends on Pro-2, which acts as the Schiff-base intermediate with DNA. Glu-3 acts as the Proton donor in catalysis. Catalysis depends on Lys-61, which acts as the Proton donor; for beta-elimination activity. DNA-binding residues include His-103, Arg-122, and Arg-164. The FPG-type zinc-finger motif lies at 250-284; sequence NAYGQTGEPCGRCGTQIVRENFMNRGSHYCPNCQK. Catalysis depends on Arg-274, which acts as the Proton donor; for delta-elimination activity.

It belongs to the FPG family. As to quaternary structure, monomer. The cofactor is Zn(2+).

It carries out the reaction Hydrolysis of DNA containing ring-opened 7-methylguanine residues, releasing 2,6-diamino-4-hydroxy-5-(N-methyl)formamidopyrimidine.. The enzyme catalyses 2'-deoxyribonucleotide-(2'-deoxyribose 5'-phosphate)-2'-deoxyribonucleotide-DNA = a 3'-end 2'-deoxyribonucleotide-(2,3-dehydro-2,3-deoxyribose 5'-phosphate)-DNA + a 5'-end 5'-phospho-2'-deoxyribonucleoside-DNA + H(+). Functionally, involved in base excision repair of DNA damaged by oxidation or by mutagenic agents. Acts as a DNA glycosylase that recognizes and removes damaged bases. Has a preference for oxidized purines, such as 7,8-dihydro-8-oxoguanine (8-oxoG). Has AP (apurinic/apyrimidinic) lyase activity and introduces nicks in the DNA strand. Cleaves the DNA backbone by beta-delta elimination to generate a single-strand break at the site of the removed base with both 3'- and 5'-phosphates. The sequence is that of Formamidopyrimidine-DNA glycosylase from Corynebacterium glutamicum (strain R).